The chain runs to 198 residues: IMP cyclohydrolase (198 aa).

It belongs to the archaeal IMP cyclohydrolase family.

The catalysed reaction is IMP + H2O = 5-formamido-1-(5-phospho-D-ribosyl)imidazole-4-carboxamide. The protein operates within purine metabolism; IMP biosynthesis via de novo pathway; IMP from 5-formamido-1-(5-phospho-D-ribosyl)imidazole-4-carboxamide: step 1/1. Catalyzes the cyclization of 5-formylamidoimidazole-4-carboxamide ribonucleotide to IMP. The chain is IMP cyclohydrolase from Thermococcus kodakarensis (strain ATCC BAA-918 / JCM 12380 / KOD1) (Pyrococcus kodakaraensis (strain KOD1)).